Here is a 341-residue protein sequence, read N- to C-terminus: Short chain dehydrogenase virL (341 aa).

NADP(+) is bound by residues leucine 49, lysine 74, aspartate 97, asparagine 123, tyrosine 210, and lysine 214. The active-site Proton donor is the tyrosine 210. The active-site Lowers pKa of active site Tyr is the lysine 214.

Belongs to the short-chain dehydrogenases/reductases (SDR) family.

It participates in secondary metabolite biosynthesis. Functionally, short chain dehydrogenase; part of the gene cluster that mediates the biosynthesis of virensols and trichoxide, fungal natural products that contain or are derived from a salicylaldehyde core. The pathway begins with the synthesis of the reduced chain in virensol C by the highly reducing polyketide synthase virA via condensation of one acetate and 8 malonate units. VirA has interesting programming rules since the first 2 ketides are fully reduced, the 3 following ketides undergo beta-dehydration, and the last 3 ketides are only reduced to beta-hydroxys to yield the trihydroxy portion. The production of aldehyde virensol C by virA alone is surprising, since virA does not contain a reductase (R) domain that is typically associated with reductive product release in HRPKS. The cupin-domain enzyme virC is involved in enhancing virA product turnover. The short-chain dehydrogenase virB then oxidizes the C-7 alcohol of virensol C to a ketone, yielding virensol D. Virensol D is further transformed to salicylaldehyde 5-deoxyaurocitrin by the short-chain dehydrogenase virD. VirD catalyzes the dehydrogenation of C-3 to form the beta-ketone aldehyde, which is followed by the generation of the nucleophilic C-2 that is required for the intramolecular aldol condensation between C-2 and C-7, itself followed by dehydration and aromatization which leads to salicylaldehyde 5-deoxyaurocitrin. While the dehydrogenation of virensol D is definitely catalyzed by virD, the aldol condensation and dehydration may be uncatalyzed or assisted by virD. The short chain dehydrogenase virG then converts salicylaldehyde 5-deoxyaurocitrin into virensol B which is further hydroxylated by the cytochrome P450 monooxygenase virE to yield the hydroquinone virensol A. VirI then may oxidize virensol A to form the quinone, while virH performs the epoxidation. Finally, the two remaining short-chain dehydrogenases, virK and virL, are probably responsible for reducing the ketones to the corresponding alcohols to furnish the epoxycyclohexanol structure in trichoxide. In Hypocrea virens (strain Gv29-8 / FGSC 10586) (Gliocladium virens), this protein is Short chain dehydrogenase virL.